We begin with the raw amino-acid sequence, 290 residues long: Pyridoxal kinase PdxY (290 aa).

Residues Ser-12 and 47–48 (TQ) contribute to the substrate site. ATP contacts are provided by residues Asp-114, Glu-151, Lys-184, and 211–214 (RPLL). A substrate-binding site is contributed by Asp-225.

Belongs to the pyridoxine kinase family. PdxY subfamily. In terms of assembly, homodimer. Mg(2+) serves as cofactor.

The catalysed reaction is pyridoxal + ATP = pyridoxal 5'-phosphate + ADP + H(+). Its pathway is cofactor metabolism; pyridoxal 5'-phosphate salvage; pyridoxal 5'-phosphate from pyridoxal: step 1/1. Pyridoxal kinase involved in the salvage pathway of pyridoxal 5'-phosphate (PLP). Catalyzes the phosphorylation of pyridoxal to PLP. This is Pyridoxal kinase PdxY from Pseudomonas putida (strain W619).